Consider the following 193-residue polypeptide: MIGRIAGILLEKNPPHLLVDCNGVGYEIDVPMSTFYNLPQTGERVVLLTQQIVREDAHLLYGFLTQQERTTFRELLKITGIGARMALAVLSGMSVQELAQAVTMQDAARLTRLPGIGKKTAERLLLELKGKLGADLGALAGAASPSDHATDILNALLALGYSEKEGLAAIKNVPAGTGVSEGIKLALKALSKA.

The tract at residues Met-1 to Leu-64 is domain I. The domain II stretch occupies residues Thr-65–Leu-139. The tract at residues Leu-139–Ala-143 is flexible linker. The tract at residues Ser-144–Ala-193 is domain III.

The protein belongs to the RuvA family. As to quaternary structure, homotetramer. Forms an RuvA(8)-RuvB(12)-Holliday junction (HJ) complex. HJ DNA is sandwiched between 2 RuvA tetramers; dsDNA enters through RuvA and exits via RuvB. An RuvB hexamer assembles on each DNA strand where it exits the tetramer. Each RuvB hexamer is contacted by two RuvA subunits (via domain III) on 2 adjacent RuvB subunits; this complex drives branch migration. In the full resolvosome a probable DNA-RuvA(4)-RuvB(12)-RuvC(2) complex forms which resolves the HJ.

Its subcellular location is the cytoplasm. Functionally, the RuvA-RuvB-RuvC complex processes Holliday junction (HJ) DNA during genetic recombination and DNA repair, while the RuvA-RuvB complex plays an important role in the rescue of blocked DNA replication forks via replication fork reversal (RFR). RuvA specifically binds to HJ cruciform DNA, conferring on it an open structure. The RuvB hexamer acts as an ATP-dependent pump, pulling dsDNA into and through the RuvAB complex. HJ branch migration allows RuvC to scan DNA until it finds its consensus sequence, where it cleaves and resolves the cruciform DNA. This Burkholderia cenocepacia (strain ATCC BAA-245 / DSM 16553 / LMG 16656 / NCTC 13227 / J2315 / CF5610) (Burkholderia cepacia (strain J2315)) protein is Holliday junction branch migration complex subunit RuvA.